A 639-amino-acid polypeptide reads, in one-letter code: Probable potassium transport system protein Kup 1 (639 aa).

Polar residues predominate over residues 1–16 (MALANTGSEAEPVEQS). Residues 1–21 (MALANTGSEAEPVEQSSHPEI) are disordered. 12 consecutive transmembrane segments (helical) span residues 29–49 (LMLG…IYAF), 67–87 (ILGV…IKYI), 117–137 (AVIL…AVIT), 154–174 (PTFQ…VFAV), 182–202 (VGLV…LSGL), 220–240 (IVAF…AIFL), 260–280 (IVLA…AGQG), 302–322 (ALIP…QAVI), 354–374 (IYMP…VVGF), 383–403 (AYGI…YVVM), 411–431 (LWVA…FFAS), and 436–456 (VFEG…GMWT).

This sequence belongs to the HAK/KUP transporter (TC 2.A.72) family.

It is found in the cell inner membrane. It catalyses the reaction K(+)(in) + H(+)(in) = K(+)(out) + H(+)(out). Transport of potassium into the cell. Likely operates as a K(+):H(+) symporter. The polypeptide is Probable potassium transport system protein Kup 1 (Mesorhizobium japonicum (strain LMG 29417 / CECT 9101 / MAFF 303099) (Mesorhizobium loti (strain MAFF 303099))).